The sequence spans 161 residues: Cytochrome c-type biogenesis protein CcmE (161 aa).

Residues Met-1 to Arg-8 are Cytoplasmic-facing. A helical; Signal-anchor for type II membrane protein transmembrane segment spans residues Leu-9–Ala-29. The Periplasmic segment spans residues Leu-30–Lys-161. Heme contacts are provided by His-131 and Tyr-135. Positions Glu-142 to Lys-161 are disordered. A compositionally biased stretch (basic and acidic residues) spans Thr-147–Lys-161.

This sequence belongs to the CcmE/CycJ family.

The protein resides in the cell inner membrane. Functionally, heme chaperone required for the biogenesis of c-type cytochromes. Transiently binds heme delivered by CcmC and transfers the heme to apo-cytochromes in a process facilitated by CcmF and CcmH. The polypeptide is Cytochrome c-type biogenesis protein CcmE (Shewanella frigidimarina (strain NCIMB 400)).